An 805-amino-acid polypeptide reads, in one-letter code: Probable phosphoketolase (805 aa).

This sequence belongs to the XFP family. Requires thiamine diphosphate as cofactor.

This Synechocystis sp. (strain ATCC 27184 / PCC 6803 / Kazusa) protein is Probable phosphoketolase.